Reading from the N-terminus, the 456-residue chain is tRNA(Ile)-lysidine synthase (456 aa).

Residue 28-33 (SGGSDS) coordinates ATP.

It belongs to the tRNA(Ile)-lysidine synthase family.

The protein resides in the cytoplasm. The enzyme catalyses cytidine(34) in tRNA(Ile2) + L-lysine + ATP = lysidine(34) in tRNA(Ile2) + AMP + diphosphate + H(+). In terms of biological role, ligates lysine onto the cytidine present at position 34 of the AUA codon-specific tRNA(Ile) that contains the anticodon CAU, in an ATP-dependent manner. Cytidine is converted to lysidine, thus changing the amino acid specificity of the tRNA from methionine to isoleucine. The protein is tRNA(Ile)-lysidine synthase of Brucella anthropi (strain ATCC 49188 / DSM 6882 / CCUG 24695 / JCM 21032 / LMG 3331 / NBRC 15819 / NCTC 12168 / Alc 37) (Ochrobactrum anthropi).